The chain runs to 223 residues: UPF0441 protein YgiB (223 aa).

Positions 178–195 (TVPKTAMAPKPATTTTVT) are enriched in low complexity. The tract at residues 178-223 (TVPKTAMAPKPATTTTVTRGGFGESVAKQSTMQRSAAGTSTRSMGG) is disordered. A compositionally biased stretch (polar residues) spans 204–223 (AKQSTMQRSAAGTSTRSMGG).

It belongs to the UPF0441 family.

This chain is UPF0441 protein YgiB, found in Salmonella enteritidis PT4 (strain P125109).